Reading from the N-terminus, the 590-residue chain is Probable metalloendopeptidase G1-type (590 aa).

Residue H41 coordinates Zn(2+). Residue E44 is part of the active site. A Zn(2+)-binding site is contributed by H45.

This sequence belongs to the peptidase M44 family. Requires Zn(2+) as cofactor.

Seems to be involved in viral proteins maturation by cleavage at Ala-Gly-|-Xaa motifs. The polypeptide is Probable metalloendopeptidase G1-type (GP045L) (Oryctolagus cuniculus (Rabbit)).